The following is a 365-amino-acid chain: Histidinol-phosphate aminotransferase (365 aa).

An N6-(pyridoxal phosphate)lysine modification is found at K223.

The protein belongs to the class-II pyridoxal-phosphate-dependent aminotransferase family. Histidinol-phosphate aminotransferase subfamily. As to quaternary structure, homodimer. The cofactor is pyridoxal 5'-phosphate.

The catalysed reaction is L-histidinol phosphate + 2-oxoglutarate = 3-(imidazol-4-yl)-2-oxopropyl phosphate + L-glutamate. It participates in amino-acid biosynthesis; L-histidine biosynthesis; L-histidine from 5-phospho-alpha-D-ribose 1-diphosphate: step 7/9. In Brucella melitensis biotype 1 (strain ATCC 23456 / CCUG 17765 / NCTC 10094 / 16M), this protein is Histidinol-phosphate aminotransferase.